Here is a 556-residue protein sequence, read N- to C-terminus: Formate--tetrahydrofolate ligase 1 (556 aa).

ATP is bound at residue 65–72 (TPAGEGKS).

It belongs to the formate--tetrahydrofolate ligase family.

It catalyses the reaction (6S)-5,6,7,8-tetrahydrofolate + formate + ATP = (6R)-10-formyltetrahydrofolate + ADP + phosphate. The protein operates within one-carbon metabolism; tetrahydrofolate interconversion. This chain is Formate--tetrahydrofolate ligase 1, found in Streptococcus pyogenes serotype M28 (strain MGAS6180).